A 270-amino-acid chain; its full sequence is Glutamate racemase (270 aa).

Substrate is bound by residues 14–15 (DS) and 46–47 (YG). Catalysis depends on C77, which acts as the Proton donor/acceptor. 78–79 (NT) contributes to the substrate binding site. Catalysis depends on C189, which acts as the Proton donor/acceptor. 190–191 (TH) contributes to the substrate binding site.

It belongs to the aspartate/glutamate racemases family.

It carries out the reaction L-glutamate = D-glutamate. The protein operates within cell wall biogenesis; peptidoglycan biosynthesis. Provides the (R)-glutamate required for cell wall biosynthesis. The sequence is that of Glutamate racemase from Neisseria gonorrhoeae (strain ATCC 700825 / FA 1090).